Reading from the N-terminus, the 166-residue chain is Cofilin-2 (166 aa).

Residues 4–153 (GVTVNDEVIK…KDRSTLGEKL (150 aa)) enclose the ADF-H domain. Residue S24 is modified to Phosphoserine. The Nuclear localization signal signature appears at 30 to 34 (KKRKK).

Belongs to the actin-binding proteins ADF family. The phosphorylation of Ser-24 may prevent recognition of the nuclear localization signal. Widely distributed in various tissues.

It localises to the nucleus matrix. Its subcellular location is the cytoplasm. The protein resides in the cytoskeleton. Controls reversibly actin polymerization and depolymerization in a pH-sensitive manner. It has the ability to bind G- and F-actin in a 1:1 ratio of cofilin to actin. It is the major component of intranuclear and cytoplasmic actin rods. The chain is Cofilin-2 (CFL2) from Gallus gallus (Chicken).